The following is a 208-amino-acid chain: LexA repressor (208 aa).

The segment at residues 28 to 48 (VREIGEAVGLASSSTVHGHLA) is a DNA-binding region (H-T-H motif). Active-site for autocatalytic cleavage activity residues include serine 130 and lysine 168.

This sequence belongs to the peptidase S24 family. In terms of assembly, homodimer.

The catalysed reaction is Hydrolysis of Ala-|-Gly bond in repressor LexA.. Functionally, represses a number of genes involved in the response to DNA damage (SOS response), including recA and lexA. In the presence of single-stranded DNA, RecA interacts with LexA causing an autocatalytic cleavage which disrupts the DNA-binding part of LexA, leading to derepression of the SOS regulon and eventually DNA repair. This chain is LexA repressor, found in Shouchella clausii (strain KSM-K16) (Alkalihalobacillus clausii).